The chain runs to 231 residues: LexA repressor (231 aa).

The segment at residues 31 to 51 (RAEIATEFGFRSANAAEEHLQ) is a DNA-binding region (H-T-H motif). Active-site for autocatalytic cleavage activity residues include serine 148 and lysine 185.

This sequence belongs to the peptidase S24 family. As to quaternary structure, homodimer.

The enzyme catalyses Hydrolysis of Ala-|-Gly bond in repressor LexA.. Functionally, represses a number of genes involved in the response to DNA damage (SOS response), including recA and lexA. In the presence of single-stranded DNA, RecA interacts with LexA causing an autocatalytic cleavage which disrupts the DNA-binding part of LexA, leading to derepression of the SOS regulon and eventually DNA repair. In Leptothrix cholodnii (strain ATCC 51168 / LMG 8142 / SP-6) (Leptothrix discophora (strain SP-6)), this protein is LexA repressor.